The following is a 157-amino-acid chain: Small ribosomal subunit protein uS7 (157 aa).

This sequence belongs to the universal ribosomal protein uS7 family. Part of the 30S ribosomal subunit. Contacts proteins S9 and S11.

Functionally, one of the primary rRNA binding proteins, it binds directly to 16S rRNA where it nucleates assembly of the head domain of the 30S subunit. Is located at the subunit interface close to the decoding center, probably blocks exit of the E-site tRNA. This Blochmanniella floridana protein is Small ribosomal subunit protein uS7.